We begin with the raw amino-acid sequence, 557 residues long: MPERDSEPFSNPLAPDGHDVDDPHSFHQSKLTNEDFRKLLMTPRAAPTSAPPSKSRHHEMPREYNEDEDPAARRRKKKSYYAKLRQQEIERERELAEKYRDRAKERRDGVNKDYEETELISTTANYRAVGPTAEADKSAAEKRRQLIQESKFLGGDMEHTHLVKGLDFALLQKVRAEIASKEKEEEELMEKPQKETKKDEDPENKIEFKTRLGRNVYRMLFKSKAYERNELFLPGRMAYVVDLDDEYADTDIPTTLIRSKADCPTMEAQTTLTTNDIVISKLTQILSYLRQGTRNKKLKKKDKGKLEEKKPPEADMNIFEDIGDYVPSTTKTPRDKERERYRERERDRERDRDRDRERERERDRERERERDREREEEKKRHSYFEKPKVDDEPMDVDKGPGSTKELIKSINEKFAGSAGWEGTESLKKPEDKKQLGDFFGMSNSYAECYPATMDDMAVDSDEEVDYSKMDQGNKKGPLGRWDFDTQEEYSEYMNNKEALPKAAFQYGIKMSEGRKTRRFKETNDKAELDRQWKKISAIIEKRKKMEADGVEVKRPKY.

The segment at 1 to 84 is disordered; that stretch reads MPERDSEPFS…RKKKSYYAKL (84 aa). Residues 16-25 show a composition bias toward basic and acidic residues; the sequence is DGHDVDDPHS. Positions 42–53 are enriched in low complexity; the sequence is TPRAAPTSAPPS. Lys-98 and Lys-137 each carry N6-acetyllysine. Lys-151 is covalently cross-linked (Glycyl lysine isopeptide (Lys-Gly) (interchain with G-Cter in SUMO2)). Positions 181–205 are disordered; the sequence is KEKEEEELMEKPQKETKKDEDPENK. Ser-287 is modified (phosphoserine). Residues 294-303 are compositionally biased toward basic residues; sequence RNKKLKKKDK. A disordered region spans residues 294-403; sequence RNKKLKKKDK…MDVDKGPGST (110 aa). The span at 304–313 shows a compositional bias: basic and acidic residues; the sequence is GKLEEKKPPE. Residues Lys-310 and Lys-331 each participate in a glycyl lysine isopeptide (Lys-Gly) (interchain with G-Cter in SUMO2) cross-link. The segment covering 332-398 has biased composition (basic and acidic residues); the sequence is TPRDKERERY…VDDEPMDVDK (67 aa). 17 repeat units span residues 342–343, 344–345, 346–347, 348–349, 350–351, 352–353, 354–355, 356–357, 358–359, 360–361, 362–363, 364–365, 366–367, 368–369, 370–371, 372–373, and 374–375. Residues 342–375 are 17 X 2 AA tandem repeats of R-[ED]; the sequence is RERERDRERDRDRDRERERERDRERERERDRERE. Glycyl lysine isopeptide (Lys-Gly) (interchain with G-Cter in SUMO2) cross-links involve residues Lys-386, Lys-388, Lys-404, and Lys-408. Phosphoserine is present on residues Ser-417 and Ser-460. Thr-485 carries the phosphothreonine modification. Residues Lys-496, Lys-501, and Lys-509 each participate in a glycyl lysine isopeptide (Lys-Gly) (interchain with G-Cter in SUMO2) cross-link. At Ser-536 the chain carries Phosphoserine. Glycyl lysine isopeptide (Lys-Gly) (interchain with G-Cter in SUMO2) cross-links involve residues Lys-541, Lys-543, Lys-544, and Lys-553.

The protein belongs to the RED family. In terms of assembly, (Microbial infection) Identified in a complex with SMU1 and influenza A virus RNA polymerase subunits PB1 and PB2. Directly interacts with SMU1 and with influenza A virus RNA polymerase subunits PB1 and PB2. As to quaternary structure, component of the spliceosome B complex. Interacts with SMU1. Interacts with MAD1L1. May interact with DHX15. Ubiquitous.

It localises to the nucleus. The protein resides in the nucleoplasm. It is found in the chromosome. Its subcellular location is the cytoplasm. The protein localises to the cytoskeleton. It localises to the spindle pole. In terms of biological role, involved in pre-mRNA splicing as a component of the spliceosome. Auxiliary spliceosomal protein that regulates selection of alternative splice sites in a small set of target pre-mRNA species. Required for normal mitotic cell cycle progression. Recruits MAD1L1 and MAD2L1 to kinetochores, and is required to trigger the spindle assembly checkpoint. Required for normal accumulation of SMU1. Functionally, (Microbial infection) Required, together with SMU1, for normal splicing of influenza A virus NS1 pre-mRNA, which is required for the production of the exportin NS2 and for the production of influenza A virus particles. Not required for the production of VSV virus particles. This is Protein Red (IK) from Homo sapiens (Human).